A 327-amino-acid chain; its full sequence is Immunodominant envelope protein p35 (327 aa).

The disordered stretch occupies residues 41-69 (KNGYDDYRDPPSPKPLPKSKQEPNADDKV). A compositionally biased stretch (basic and acidic residues) spans 59–69 (SKQEPNADDKV). Residues 291–311 (ITMMFLIAIVIIIGLAIFDIN) form a helical membrane-spanning segment.

It belongs to the poxviruses protein p35 family.

It localises to the virion membrane. Its function is as follows. Envelope protein that binds to the cell surface to provide virion attachment to target cell. The polypeptide is Immunodominant envelope protein p35 (Fowlpox virus (strain NVSL) (FPV)).